Consider the following 33-residue polypeptide: Protamine TP17 (33 aa).

Positions 1–33 are disordered; it reads MPRRRRSSSRPVRRRRRPRVSRRRRRRGRRRRR.

Testis.

It localises to the nucleus. It is found in the chromosome. Functionally, protamines substitute for histones in the chromatin of sperm during the haploid phase of spermatogenesis. They compact sperm DNA into a highly condensed, stable and inactive complex. The polypeptide is Protamine TP17 (Oncorhynchus mykiss (Rainbow trout)).